Consider the following 597-residue polypeptide: Kelch-like protein 21 (597 aa).

Positions 35–103 (LDVTLEAAGG…SYTGRVAVSG (69 aa)) constitute a BTB domain. The region spanning 138–239 (CLDMQDFAEA…RRFYLLAHVE (102 aa)) is the BACK domain. Kelch repeat units lie at residues 287–335 (ILVL…ALGN), 336–382 (DIYV…VLDG), 384–422 (LYVVAADSTERYDHTTDSWEALQPMTYPMDNCSTTACRG), 423–470 (RLYA…TLNG), 472–512 (MYFV…VLGG), and 513–560 (KLYV…SIFR). Residues 570–597 (GRGFELDSGSDDMDPGRPRPPRDPDELH) form a disordered region. The segment covering 583 to 597 (DPGRPRPPRDPDELH) has biased composition (basic and acidic residues).

As to quaternary structure, component of the BCR(KLHL21) E3 ubiquitin ligase complex, at least composed of CUL3, KLHL21 and RBX1.

It is found in the cytoplasm. It localises to the cytoskeleton. Its subcellular location is the spindle. The protein operates within protein modification; protein ubiquitination. In terms of biological role, substrate-specific adapter of a BCR (BTB-CUL3-RBX1) E3 ubiquitin-protein ligase complex required for efficient chromosome alignment and cytokinesis. The BCR(KLHL21) E3 ubiquitin ligase complex regulates localization of the chromosomal passenger complex (CPC) from chromosomes to the spindle midzone in anaphase and mediates the ubiquitination of AURKB. Ubiquitination of AURKB by BCR(KLHL21) E3 ubiquitin ligase complex may not lead to its degradation by the proteasome. The sequence is that of Kelch-like protein 21 (KLHL21) from Homo sapiens (Human).